The chain runs to 148 residues: Putative pre-16S rRNA nuclease (148 aa).

This sequence belongs to the YqgF nuclease family.

It localises to the cytoplasm. In terms of biological role, could be a nuclease involved in processing of the 5'-end of pre-16S rRNA. This chain is Putative pre-16S rRNA nuclease, found in Chlamydia muridarum (strain MoPn / Nigg).